The primary structure comprises 233 residues: UPF0725 protein At4g17990 (233 aa).

It belongs to the UPF0725 (EMB2204) family.

The protein is UPF0725 protein At4g17990 of Arabidopsis thaliana (Mouse-ear cress).